The sequence spans 386 residues: Alanine racemase (386 aa).

Lysine 48 functions as the Proton acceptor; specific for D-alanine in the catalytic mechanism. An N6-(pyridoxal phosphate)lysine modification is found at lysine 48. Residue arginine 149 participates in substrate binding. Tyrosine 278 (proton acceptor; specific for L-alanine) is an active-site residue. Residue methionine 326 participates in substrate binding.

Belongs to the alanine racemase family. Pyridoxal 5'-phosphate serves as cofactor.

It catalyses the reaction L-alanine = D-alanine. It participates in amino-acid biosynthesis; D-alanine biosynthesis; D-alanine from L-alanine: step 1/1. Its function is as follows. Catalyzes the interconversion of L-alanine and D-alanine. May also act on other amino acids. The protein is Alanine racemase (alr) of Nostoc sp. (strain PCC 7120 / SAG 25.82 / UTEX 2576).